The primary structure comprises 569 residues: Proline--tRNA ligase (569 aa).

Belongs to the class-II aminoacyl-tRNA synthetase family. ProS type 1 subfamily. Homodimer.

The protein resides in the cytoplasm. The catalysed reaction is tRNA(Pro) + L-proline + ATP = L-prolyl-tRNA(Pro) + AMP + diphosphate. In terms of biological role, catalyzes the attachment of proline to tRNA(Pro) in a two-step reaction: proline is first activated by ATP to form Pro-AMP and then transferred to the acceptor end of tRNA(Pro). As ProRS can inadvertently accommodate and process non-cognate amino acids such as alanine and cysteine, to avoid such errors it has two additional distinct editing activities against alanine. One activity is designated as 'pretransfer' editing and involves the tRNA(Pro)-independent hydrolysis of activated Ala-AMP. The other activity is designated 'posttransfer' editing and involves deacylation of mischarged Ala-tRNA(Pro). The misacylated Cys-tRNA(Pro) is not edited by ProRS. The sequence is that of Proline--tRNA ligase from Legionella pneumophila (strain Paris).